We begin with the raw amino-acid sequence, 85 residues long: Arminin 524 (85 aa).

Residues 1–18 (MKAVFAILFLAFIALTYA) form the signal peptide. Positions 19-57 (KSYDEVKEEIKNEVEREIFEDLEEESDELDNDVEEFNDA) are excised as a propeptide. An Alanine amide modification is found at Ala-82.

The protein belongs to the arminin family. As to expression, expressed in entodermal epithelium along the body column.

Its subcellular location is the secreted. It localises to the target cell membrane. In terms of biological role, antimicrobial peptide with a broad-spectrum antimicrobial activity. Keeps its antibacterial activity under a wide range of salt concentrations that mimic physiological conditions of human blood, which is surprising, since Hydra is an obligate freshwater animal with nearly no salt tolerance. Does not affect red blood cells. This Hydra oligactis (Brown hydra) protein is Arminin 524.